Consider the following 579-residue polypeptide: Ribonucleoside-diphosphate reductase small chain (579 aa).

3 residues coordinate Fe cation: Asp130, Glu160, and His163. Tyr167 is an active-site residue. The Fe cation site is built by Glu225, Glu258, and His261. A Fido domain is found at 435–579 (DMTWTLKDVH…VSVFVDQFYR (145 aa)).

The protein belongs to the ribonucleoside diphosphate reductase small chain family. Heterotetramer composed of a homodimer of the large subunit (R1) and a homodimer of the small subunit (R2). Larger multisubunit protein complex are also active, composed of (R1)n(R2)n. Fe cation is required as a cofactor.

The catalysed reaction is a 2'-deoxyribonucleoside 5'-diphosphate + [thioredoxin]-disulfide + H2O = a ribonucleoside 5'-diphosphate + [thioredoxin]-dithiol. In terms of biological role, ribonucleoside-diphosphate reductase holoenzyme provides the precursors necessary for viral DNA synthesis. Allows virus growth in non-dividing cells. Catalyzes the biosynthesis of deoxyribonucleotides from the corresponding ribonucleotides. In Magallana gigas (Pacific oyster), this protein is Ribonucleoside-diphosphate reductase small chain.